Consider the following 577-residue polypeptide: Glycine--tRNA ligase (577 aa).

Residues Arg-96 and Glu-161 each contribute to the substrate site. Residues 193-195 (RNE), 203-208 (IRLREF), 319-320 (EI), and 434-437 (GIDR) each bind ATP. A substrate-binding site is contributed by 208–212 (FSQAE). 430 to 434 (EPSFG) provides a ligand contact to substrate.

The protein belongs to the class-II aminoacyl-tRNA synthetase family.

It is found in the cytoplasm. The catalysed reaction is tRNA(Gly) + glycine + ATP = glycyl-tRNA(Gly) + AMP + diphosphate. Its function is as follows. Catalyzes the attachment of glycine to tRNA(Gly). The chain is Glycine--tRNA ligase from Methanothrix thermoacetophila (strain DSM 6194 / JCM 14653 / NBRC 101360 / PT) (Methanosaeta thermophila).